The chain runs to 141 residues: Putative nickel-responsive regulator (141 aa).

Ni(2+)-binding residues include H80, H91, H93, and C99.

Belongs to the transcriptional regulatory CopG/NikR family. It depends on Ni(2+) as a cofactor.

Functionally, transcriptional regulator. The chain is Putative nickel-responsive regulator from Methanococcus maripaludis (strain C7 / ATCC BAA-1331).